Consider the following 426-residue polypeptide: MISCSVRRRPRWEPQVGAAFLAFALLPVLASGRGMQAAVATAAGSSGSGSDGKHPGKEQFLQFLIPSGGRYEYLGVSFTALADDASFFEANPAGSAGLSRGEVALFHHSQIHDSHTETVSFARRTQNTGYGASVRAFSSESDLKSFFGGNSGGNKNGGHQGKQGKGFVAIANASHTFCGQYRFKGVSFGCNFKMGFRKGKTDSHVTVAGDLGLRAAFSVAKNFGSNEPNMHVGLVLKNAGISVKTNSCQVEHLNPAIAVGFAYRPVYAFLFSLGLQQTLTKRESPVCSVGFMFFCTQHVTLLASAACEGGAYALSGGAEIRIGSFHLDMGYRYDQIFQAAHPHHVSVGLKWLIPNGGTQADQALLVKESYLVGLRFYDQRRYQEAITAWQLTLRQDPGFEPAAEGIERARRFLKLHEKLSLFDILN.

Positions 1 to 37 (MISCSVRRRPRWEPQVGAAFLAFALLPVLASGRGMQA) are cleaved as a signal peptide.

This sequence belongs to the UPF0164 family.

This chain is UPF0164 protein TP_0548, found in Treponema pallidum (strain Nichols).